Here is a 303-residue protein sequence, read N- to C-terminus: Probable cell division protein WhiA (303 aa).

The segment at residues 272-303 (SLQQIADSLDFAITKSGVNHRLRKINKLAEDL) is a DNA-binding region (H-T-H motif).

It belongs to the WhiA family.

In terms of biological role, involved in cell division and chromosome segregation. This is Probable cell division protein WhiA from Streptococcus equi subsp. zooepidemicus (strain MGCS10565).